The following is a 439-amino-acid chain: Tol-Pal system protein TolB (439 aa).

Residues 1–22 (MKKPLRWLAALTALLLPLSAFA) form the signal peptide.

The protein belongs to the TolB family. The Tol-Pal system is composed of five core proteins: the inner membrane proteins TolA, TolQ and TolR, the periplasmic protein TolB and the outer membrane protein Pal. They form a network linking the inner and outer membranes and the peptidoglycan layer.

The protein resides in the periplasm. Functionally, part of the Tol-Pal system, which plays a role in outer membrane invagination during cell division and is important for maintaining outer membrane integrity. This is Tol-Pal system protein TolB from Xanthomonas campestris pv. campestris (strain 8004).